The following is a 357-amino-acid chain: Protein RecA (357 aa).

67–74 (GPESSGKT) contributes to the ATP binding site. The interval 332 to 357 (PSAMSSSSSDDENSEGNVDFETGEVF) is disordered.

It belongs to the RecA family.

The protein localises to the cytoplasm. Can catalyze the hydrolysis of ATP in the presence of single-stranded DNA, the ATP-dependent uptake of single-stranded DNA by duplex DNA, and the ATP-dependent hybridization of homologous single-stranded DNAs. It interacts with LexA causing its activation and leading to its autocatalytic cleavage. In Shewanella sp. (strain ANA-3), this protein is Protein RecA.